Here is a 241-residue protein sequence, read N- to C-terminus: Fatty acid metabolism regulator protein (241 aa).

Residues 11–79 (QSPAALAEEY…HGKPTKVNNI (69 aa)) enclose the HTH gntR-type domain. Positions 39–58 (ERDLADKIGVTRTTLREVLQ) form a DNA-binding region, H-T-H motif.

Homodimer.

The protein localises to the cytoplasm. Multifunctional regulator of fatty acid metabolism. The sequence is that of Fatty acid metabolism regulator protein from Haemophilus influenzae (strain 86-028NP).